Here is a 440-residue protein sequence, read N- to C-terminus: GTPase Der (440 aa).

2 consecutive EngA-type G domains span residues 3–167 (PIIA…PYDR) and 176–351 (TRIA…EQYC). Residues 9 to 16 (GRPNVGKS), 56 to 60 (DTGGF), 119 to 122 (NKVD), 182 to 189 (GRPNVGKS), 229 to 233 (DTAGI), and 294 to 297 (NKWD) each bind GTP. Residues 352 to 436 (KRVTTGELNR…PLKLIFRGRD (85 aa)) enclose the KH-like domain.

The protein belongs to the TRAFAC class TrmE-Era-EngA-EngB-Septin-like GTPase superfamily. EngA (Der) GTPase family. In terms of assembly, associates with the 50S ribosomal subunit.

In terms of biological role, GTPase that plays an essential role in the late steps of ribosome biogenesis. The polypeptide is GTPase Der (Geobacter sp. (strain M21)).